The chain runs to 225 residues: Lipoarabinomannan carrier protein LprG (225 aa).

The signal sequence occupies residues 1–21 (MRNRIRLALIPVAVAAIALAG). C22 carries N-palmitoyl cysteine lipidation. C22 carries S-diacylglycerol cysteine lipidation.

Belongs to the LppX/LprAFG lipoprotein family. Modified by Lgt on Cys-22 with an S-linked diacylglyceral, signal peptide is removed by LspA, Cys-22 is further modifed with a fatty acid on its amino group by Lnt yielding a triacylated protein.

The protein localises to the cell inner membrane. Functionally, helps membrane protein MAB_2807 (P55) transport triacylglycerides (TAG) across the inner cell membrane into the periplasm and probably ultimately to the outer membrane. Binds TAG in its hydrophobic cavity and transfers it between lipid bilayers. TAG probably regulates lipid metabolism and growth regulation and plays a structural role in the outer membrane. Also binds mannosides, lipoarabinomannan and lipomannan and various glycolipids in the same cavity. The chain is Lipoarabinomannan carrier protein LprG from Mycobacteroides abscessus (strain ATCC 19977 / DSM 44196 / CCUG 20993 / CIP 104536 / JCM 13569 / NCTC 13031 / TMC 1543 / L948) (Mycobacterium abscessus).